The primary structure comprises 383 residues: Protein delta homolog 2 (383 aa).

A signal peptide spans 1–26 (MPSGCRCLHLVCLLCILGAPVKPARG). EGF-like domains lie at 27 to 58 (NDCS…LHCE), 62 to 89 (RMPG…KFCD), 91 to 129 (DEHI…RDCE), and 131 to 172 (KAGP…ARCE). The Extracellular segment spans residues 27-306 (NDCSSLCDLA…RQEAGLGEPS (280 aa)). Cystine bridges form between cysteine 29-cysteine 40, cysteine 33-cysteine 46, cysteine 48-cysteine 57, cysteine 66-cysteine 71, cysteine 79-cysteine 88, cysteine 95-cysteine 107, cysteine 101-cysteine 117, cysteine 119-cysteine 128, cysteine 135-cysteine 148, cysteine 142-cysteine 160, cysteine 162-cysteine 171, cysteine 178-cysteine 189, cysteine 183-cysteine 198, cysteine 200-cysteine 209, cysteine 216-cysteine 227, cysteine 221-cysteine 236, and cysteine 238-cysteine 247. Asparagine 157 carries N-linked (GlcNAc...) asparagine glycosylation. The EGF-like 5; calcium-binding domain maps to 174-210 (NVDDCLMRPCANGATCLDGINRFSCLCPEGFTGRFCT). An EGF-like 6; calcium-binding domain is found at 212 to 248 (NLDDCASRPCQRGARCRDRVHDFDCLCPSGYGGKTCE). The chain crosses the membrane as a helical span at residues 307–327 (LVAVVVFGAVTAALVLSTVLL). The Cytoplasmic segment spans residues 328-383 (TLRAWRRGFCPPGPCCYPAPHYAPARQDQECQVSMLPTGLPLPPDLPPEPGKTTAL). The segment at 364–383 (PTGLPLPPDLPPEPGKTTAL) is disordered. The span at 367–377 (LPLPPDLPPEP) shows a compositional bias: pro residues.

Its subcellular location is the membrane. Functionally, regulates adipogenesis. The protein is Protein delta homolog 2 (DLK2) of Bos taurus (Bovine).